A 78-amino-acid polypeptide reads, in one-letter code: Small ribosomal subunit protein bS16c (78 aa).

This sequence belongs to the bacterial ribosomal protein bS16 family.

It localises to the plastid. It is found in the chloroplast. The protein is Small ribosomal subunit protein bS16c of Panax ginseng (Korean ginseng).